Consider the following 164-residue polypeptide: Phospholipase A and acyltransferase 4 (164 aa).

The segment at Met-1–Ser-40 is essential for its ability regulate keratinocyte differentiation. Residues Met-1–Lys-134 are Cytoplasmic-facing. Positions Leu-13–Gln-129 constitute an LRAT domain. Residues His-23 and His-35 contribute to the active site. Cys-113 acts as the Acyl-thioester intermediate in catalysis. Residues Lys-124–Ala-164 form an interaction with TGM1 region. Residues Val-135–Ile-155 traverse the membrane as a helical segment. Topologically, residues Arg-156–Ala-164 are lumenal.

The protein belongs to the H-rev107 family. In terms of assembly, interacts with TGM1. Widely expressed.

It localises to the membrane. The enzyme catalyses a 1,2-diacyl-sn-glycero-3-phosphocholine + H2O = a 1-acyl-sn-glycero-3-phosphocholine + a fatty acid + H(+). The catalysed reaction is a 1,2-diacyl-sn-glycero-3-phosphocholine + H2O = a 2-acyl-sn-glycero-3-phosphocholine + a fatty acid + H(+). It carries out the reaction 1,2-dihexadecanoyl-sn-glycero-3-phosphocholine + H2O = 1-hexadecanoyl-sn-glycero-3-phosphocholine + hexadecanoate + H(+). It catalyses the reaction 1,2-dihexadecanoyl-sn-glycero-3-phosphocholine + H2O = 2-hexadecanoyl-sn-glycero-3-phosphocholine + hexadecanoate + H(+). The enzyme catalyses 1-hexadecanoyl-2-(9Z-octadecenoyl)-sn-glycero-3-phosphocholine + H2O = 2-(9Z-octadecenoyl)-sn-glycero-3-phosphocholine + hexadecanoate + H(+). The catalysed reaction is 1-hexadecanoyl-2-(9Z-octadecenoyl)-sn-glycero-3-phosphocholine + H2O = 1-hexadecanoyl-sn-glycero-3-phosphocholine + (9Z)-octadecenoate + H(+). It carries out the reaction 1-hexadecanoyl-2-(5Z,8Z,11Z,14Z-eicosatetraenoyl)-sn-glycero-3-phosphocholine + H2O = 2-(5Z,8Z,11Z,14Z)-eicosatetraenoyl-sn-glycero-3-phosphocholine + hexadecanoate + H(+). It catalyses the reaction 1-hexadecanoyl-2-(9Z,12Z-octadecadienoyl)-sn-glycero-3-phosphoethanolamine + H2O = 1-hexadecanoyl-sn-glycero-3-phosphoethanolamine + (9Z,12Z)-octadecadienoate + H(+). The enzyme catalyses 1-hexadecanoyl-2-(9Z,12Z-octadecadienoyl)-sn-glycero-3-phosphoethanolamine + H2O = 2-(9Z,12Z)-octadecadienoyl-sn-glycero-3-phosphoethanolamine + hexadecanoate + H(+). The catalysed reaction is 1-hexadecanoyl-2-(5Z,8Z,11Z,14Z-eicosatetraenoyl)-sn-glycero-3-phosphoethanolamine + H2O = 2-(5Z,8Z,11Z,14Z)-eicosatetraenoyl-sn-glycero-3-phosphoethanolamine + hexadecanoate + H(+). It carries out the reaction 1-hexanoyl-2-acyl-sn-glycero-3-phosphocholine + H2O = hexanoate + a 2-acyl-sn-glycero-3-phosphocholine + H(+). It catalyses the reaction 1,2-diheptadecanoyl-sn-glycero-3-phosphoethanolamine + 1-(9Z-octadecenoyl)-2-hexadecanoyl-sn-glycero-3-phosphocholine = 1,2-diheptadecanoyl-sn-glycero-3-phospho-N-hexadecanoyl-ethanolamine + 1-(9Z-octadecenoyl)-sn-glycero-3-phosphocholine + H(+). The enzyme catalyses 1,2-diheptadecanoyl-sn-glycero-3-phosphoethanolamine + 1-(9Z-octadecenoyl)-2-hexadecanoyl-sn-glycero-3-phosphocholine = 1,2-diheptadecanoyl-sn-glycero-3-phospho-N-(9Z-octadecenoyl)-ethanolamine + 2-hexadecanoyl-sn-glycero-3-phosphocholine + H(+). Its function is as follows. Exhibits both phospholipase A1/2 and acyltransferase activities. Shows phospholipase A1 (PLA1) and A2 (PLA2), catalyzing the calcium-independent release of fatty acids from the sn-1 or sn-2 position of glycerophospholipids. For most substrates, PLA1 activity is much higher than PLA2 activity. Shows O-acyltransferase activity, catalyzing the transfer of a fatty acyl group from glycerophospholipid to the hydroxyl group of lysophospholipid. Shows N-acyltransferase activity, catalyzing the calcium-independent transfer of a fatty acyl group at the sn-1 position of phosphatidylcholine (PC) and other glycerophospholipids to the primary amine of phosphatidylethanolamine (PE), forming N-acylphosphatidylethanolamine (NAPE), which serves as precursor for N-acylethanolamines (NAEs). Promotes keratinocyte differentiation via activation of TGM1. The sequence is that of Phospholipase A and acyltransferase 4 from Homo sapiens (Human).